Reading from the N-terminus, the 467-residue chain is ATP synthase subunit beta (467 aa).

Residue 150–157 (GGAGVGKT) participates in ATP binding.

The protein belongs to the ATPase alpha/beta chains family. In terms of assembly, F-type ATPases have 2 components, CF(1) - the catalytic core - and CF(0) - the membrane proton channel. CF(1) has five subunits: alpha(3), beta(3), gamma(1), delta(1), epsilon(1). CF(0) has three main subunits: a(1), b(2) and c(9-12). The alpha and beta chains form an alternating ring which encloses part of the gamma chain. CF(1) is attached to CF(0) by a central stalk formed by the gamma and epsilon chains, while a peripheral stalk is formed by the delta and b chains.

It is found in the cell inner membrane. The enzyme catalyses ATP + H2O + 4 H(+)(in) = ADP + phosphate + 5 H(+)(out). Produces ATP from ADP in the presence of a proton gradient across the membrane. The catalytic sites are hosted primarily by the beta subunits. This Aliivibrio fischeri (strain ATCC 700601 / ES114) (Vibrio fischeri) protein is ATP synthase subunit beta.